The primary structure comprises 359 residues: NADH-quinone oxidoreductase subunit H (359 aa).

Transmembrane regions (helical) follow at residues 16 to 36 (IWPA…CVLL), 94 to 114 (GLFV…WAVI), 129 to 149 (LLFL…AGWA), 167 to 187 (VSYE…SASL), 208 to 228 (FLSW…ISGL), 261 to 281 (FFLA…ILFL), 296 to 316 (IPGW…FLWV), and 331 to 351 (LGWK…GAWM).

The protein belongs to the complex I subunit 1 family. In terms of assembly, NDH-1 is composed of 14 different subunits. Subunits NuoA, H, J, K, L, M, N constitute the membrane sector of the complex.

It is found in the cell inner membrane. The catalysed reaction is a quinone + NADH + 5 H(+)(in) = a quinol + NAD(+) + 4 H(+)(out). In terms of biological role, NDH-1 shuttles electrons from NADH, via FMN and iron-sulfur (Fe-S) centers, to quinones in the respiratory chain. The immediate electron acceptor for the enzyme in this species is believed to be ubiquinone. Couples the redox reaction to proton translocation (for every two electrons transferred, four hydrogen ions are translocated across the cytoplasmic membrane), and thus conserves the redox energy in a proton gradient. This subunit may bind ubiquinone. In Polaromonas sp. (strain JS666 / ATCC BAA-500), this protein is NADH-quinone oxidoreductase subunit H.